Reading from the N-terminus, the 230-residue chain is Putative transcription factor bHLH107 (230 aa).

Residues 44 to 93 form the bHLH domain; sequence ASLRNHKEAERKRRARINSHLNKLRKLLSCNSKTDKSTLLAKVVQRVKEL.

In terms of assembly, homodimer.

Its subcellular location is the nucleus. The protein is Putative transcription factor bHLH107 (BHLH107) of Arabidopsis thaliana (Mouse-ear cress).